The primary structure comprises 620 residues: MALLQIAEPGQSSAPHEHRIAIGIDLGTTHSLVATVLSGQSKVLQDEKGRVLFPSIVHYAEQSIEYGDDAKPFITTDPKNSIISVKRFMGRSKADIKFQHPYVLVGNDNEMPAFETAQGRKTPVEISAAILNQLKIRAEESLKNPINGAVITVPAYFDEAQRQATRDAAQLAGLNVLRLLNEPTAAAIAYGLDQENQLSSDRNYVIYDLGGGTFDVSILRFSQGVFEVLATGGHTALGGDDLDRLIVKWAKKQLHIESLDDHEYAAFLVAARTAKEQLSEQQSVYFKALDHKLELNRDTFESIIQIALDKTISVCKRVLRDAKLSLDEIEKVVLVGGSTRSYAVQNVVRQVFNQEPLCTINPDEVVAIGASITANQLIGNSQDGSLLLDVTPLSLGLETMGGLVERLISRNTAIPVARRQEFTTYQDGQSAMLIHVVQGERDLVEHCRSLGRFVLHGIPPMTAGQARIEVTFQVDADGLLTVSAQETTSGVKAQIDIKPSYGLSATDTERLLLEGFQHAEEDKNLRHLQETKVEAQRELEALEQALKNDAGLLDIQQLQALHTAKDQLQQQLQSNDIDQIERAVAQLKIHSDEFAALRMNQHIDHALKGTKLEDWSDSQK.

This sequence belongs to the heat shock protein 70 family.

Its function is as follows. Chaperone involved in the maturation of iron-sulfur cluster-containing proteins. Has a low intrinsic ATPase activity which is markedly stimulated by HscB. This Acinetobacter baylyi (strain ATCC 33305 / BD413 / ADP1) protein is Chaperone protein HscA homolog.